The primary structure comprises 151 residues: Sigma factor binding protein 1, chloroplastic (151 aa).

The span at 1 to 13 shows a compositional bias: low complexity; that stretch reads MESSSSTFLTTTS. Disordered regions lie at residues 1–41 and 66–93; these read MESS…KPIK and TGQD…PPAE. The N-terminal 54 residues, 1–54, are a transit peptide targeting the chloroplast; sequence MESSSSTFLTTTSLDKKKPSPVSRKSPKQKKKTTSTNKPIKVRYISNPMRVQTC. The short motif at 16–32 is the Bipartite nuclear localization signal element; the sequence is KKKPSPVSRKSPKQKKK. The VQ signature appears at 58–67; it reads FRELVQELTG.

In terms of assembly, interacts with the sigma factor SIGA in chloroplast. Interacts with WRKY25 and WRKY33 in the nucleus. In terms of tissue distribution, expressed in leaves and roots, but not in flowers.

It localises to the plastid. It is found in the chloroplast. The protein localises to the nucleus. Functionally, contributes to plant defense. May regulate chloroplast metabolism upon infection with pathogens such as Pseudomonas syringae. Functions as activator of WRKY33 in plant defense against necrotrophic pathogens by stimulating the DNA-binding activity of WRKY33. The polypeptide is Sigma factor binding protein 1, chloroplastic (SIB1) (Arabidopsis thaliana (Mouse-ear cress)).